We begin with the raw amino-acid sequence, 229 residues long: Biosynthetic peptidoglycan transglycosylase (229 aa).

A helical transmembrane segment spans residues 11–31; that stretch reads NLLLALFLVLVAGPVVAVILY.

The protein belongs to the glycosyltransferase 51 family.

Its subcellular location is the cell inner membrane. The enzyme catalyses [GlcNAc-(1-&gt;4)-Mur2Ac(oyl-L-Ala-gamma-D-Glu-L-Lys-D-Ala-D-Ala)](n)-di-trans,octa-cis-undecaprenyl diphosphate + beta-D-GlcNAc-(1-&gt;4)-Mur2Ac(oyl-L-Ala-gamma-D-Glu-L-Lys-D-Ala-D-Ala)-di-trans,octa-cis-undecaprenyl diphosphate = [GlcNAc-(1-&gt;4)-Mur2Ac(oyl-L-Ala-gamma-D-Glu-L-Lys-D-Ala-D-Ala)](n+1)-di-trans,octa-cis-undecaprenyl diphosphate + di-trans,octa-cis-undecaprenyl diphosphate + H(+). It functions in the pathway cell wall biogenesis; peptidoglycan biosynthesis. Its function is as follows. Peptidoglycan polymerase that catalyzes glycan chain elongation from lipid-linked precursors. The sequence is that of Biosynthetic peptidoglycan transglycosylase from Caulobacter vibrioides (strain ATCC 19089 / CIP 103742 / CB 15) (Caulobacter crescentus).